Consider the following 202-residue polypeptide: Probable GTP-binding protein EngB (202 aa).

Positions 30-201 constitute an EngB-type G domain; sequence NILQIALAGR…WERIQYTIDS (172 aa). Residues 38 to 45, 65 to 69, 84 to 87, 151 to 154, and 180 to 182 contribute to the GTP site; these read GRSNVGKS, GKTRS, DLPG, TKID, and VSS. Residues Ser-45 and Thr-67 each contribute to the Mg(2+) site.

Belongs to the TRAFAC class TrmE-Era-EngA-EngB-Septin-like GTPase superfamily. EngB GTPase family. Mg(2+) serves as cofactor.

In terms of biological role, necessary for normal cell division and for the maintenance of normal septation. The chain is Probable GTP-binding protein EngB from Lawsonia intracellularis (strain PHE/MN1-00).